Reading from the N-terminus, the 365-residue chain is Myb/SANT-like DNA-binding domain-containing protein 3 (365 aa).

Positions 13 to 78 constitute a Myb-like domain; that stretch reads FSELEKSVLL…QLKKCWENIK (66 aa). Positions 301–337 form a coiled coil; sequence QLIQMNEVHVAKVQQIERECEMAEEEHRIKMEILNKK.

The protein belongs to the MSANTD3 family.

This chain is Myb/SANT-like DNA-binding domain-containing protein 3 (msantd3), found in Xenopus tropicalis (Western clawed frog).